The sequence spans 224 residues: LexA repressor (224 aa).

Residues 38–58 constitute a DNA-binding region (H-T-H motif); it reads IREIGDAVGLTSTSSVAHQLR. Positions 71–82 are enriched in basic and acidic residues; that stretch reads NRPRAVDVRGID. The tract at residues 71–96 is disordered; sequence NRPRAVDVRGIDDAGTPSATTDVIGS. Residues serine 148 and lysine 185 each act as for autocatalytic cleavage activity in the active site.

This sequence belongs to the peptidase S24 family. Homodimer.

The catalysed reaction is Hydrolysis of Ala-|-Gly bond in repressor LexA.. Its function is as follows. Represses a number of genes involved in the response to DNA damage (SOS response), including recA and lexA. In the presence of single-stranded DNA, RecA interacts with LexA causing an autocatalytic cleavage which disrupts the DNA-binding part of LexA, leading to derepression of the SOS regulon and eventually DNA repair. In Mycobacteroides abscessus (strain ATCC 19977 / DSM 44196 / CCUG 20993 / CIP 104536 / JCM 13569 / NCTC 13031 / TMC 1543 / L948) (Mycobacterium abscessus), this protein is LexA repressor.